The following is a 321-amino-acid chain: Mitochondrial thiamine pyrophosphate carrier 1 (321 aa).

The next 6 helical transmembrane spans lie at 12-28 (GTRR…GLVS), 91-107 (LMYV…YRTT), 126-146 (FVAG…LDLL), 184-200 (AAVG…FATY), 221-237 (AAGV…MFPL), and 284-301 (GLTV…VTMW). Solcar repeat units lie at residues 12–110 (GTRR…TTQA), 120–206 (PPSA…LRPP), and 214–309 (PFGS…SLRL).

The protein belongs to the mitochondrial carrier (TC 2.A.29) family.

It localises to the mitochondrion inner membrane. In terms of biological role, mitochondrial transporter that mediates uptake of thiamine pyrophosphate (ThPP) into mitochondria. In Aspergillus niger (strain ATCC MYA-4892 / CBS 513.88 / FGSC A1513), this protein is Mitochondrial thiamine pyrophosphate carrier 1 (tpc1).